Here is a 618-residue protein sequence, read N- to C-terminus: Uptake hydrogenase large subunit (618 aa).

Residues Cys75, Cys78, Cys597, and Cys600 each coordinate Ni(2+).

It belongs to the [NiFe]/[NiFeSe] hydrogenase large subunit family. As to quaternary structure, heterodimer of a large and a small subunit. Requires Ni(2+) as cofactor.

It is found in the cell membrane. The catalysed reaction is H2 + A = AH2. This enzyme recycles the H(2) produced by nitrogenase to increase the production of ATP and to protect nitrogenase against inhibition or damage by O(2) under carbon- or phosphate-limited conditions. The protein is Uptake hydrogenase large subunit (hoxG) of Cupriavidus necator (strain ATCC 17699 / DSM 428 / KCTC 22496 / NCIMB 10442 / H16 / Stanier 337) (Ralstonia eutropha).